A 706-amino-acid polypeptide reads, in one-letter code: Ribosomal RNA large subunit methyltransferase K/L (706 aa).

Residues 43–154 (LMYQSLLWSR…RDMASVALDL (112 aa)) form the THUMP domain.

This sequence belongs to the methyltransferase superfamily. RlmKL family.

The protein resides in the cytoplasm. It carries out the reaction guanosine(2445) in 23S rRNA + S-adenosyl-L-methionine = N(2)-methylguanosine(2445) in 23S rRNA + S-adenosyl-L-homocysteine + H(+). The enzyme catalyses guanosine(2069) in 23S rRNA + S-adenosyl-L-methionine = N(2)-methylguanosine(2069) in 23S rRNA + S-adenosyl-L-homocysteine + H(+). Specifically methylates the guanine in position 2445 (m2G2445) and the guanine in position 2069 (m7G2069) of 23S rRNA. In Yersinia pseudotuberculosis serotype IB (strain PB1/+), this protein is Ribosomal RNA large subunit methyltransferase K/L.